The following is a 198-amino-acid chain: Endonuclease V (198 aa).

Mg(2+) contacts are provided by Asp38 and Asp101.

It belongs to the endonuclease V family. Requires Mg(2+) as cofactor.

The protein resides in the cytoplasm. It carries out the reaction Endonucleolytic cleavage at apurinic or apyrimidinic sites to products with a 5'-phosphate.. Functionally, DNA repair enzyme involved in the repair of deaminated bases. Selectively cleaves double-stranded DNA at the second phosphodiester bond 3' to a deoxyinosine leaving behind the intact lesion on the nicked DNA. The polypeptide is Endonuclease V (Saccharolobus islandicus (strain Y.N.15.51 / Yellowstone #2) (Sulfolobus islandicus)).